The chain runs to 143 residues: MKLETKCHGIIEYKEEDVIEFKKGIPGFNELKRFINFPIEDNEVFSVLHSIENNEIGFIVTSPFSIIKDYEINLDDSVIERLNIENEKDVLVLNTVTLHSKLENITVNLCAPIVINIKTKLGEQIILNNGKYQIKHPLFKEGI.

This sequence belongs to the FliW family. As to quaternary structure, interacts with translational regulator CsrA and flagellin(s).

It localises to the cytoplasm. In terms of biological role, acts as an anti-CsrA protein, binds CsrA and prevents it from repressing translation of its target genes, one of which is flagellin. Binds to flagellin and participates in the assembly of the flagellum. This chain is Flagellar assembly factor FliW, found in Clostridium novyi (strain NT).